A 306-amino-acid polypeptide reads, in one-letter code: Golgi to ER traffic protein 2 (306 aa).

Over residues 1-18 (MSEISDAEKRRILREKRQ) the composition is skewed to basic and acidic residues. Residues 1–100 (MSEISDAEKR…PPGSAEQQNG (100 aa)) form a disordered region. Over 1–172 (MSEISDAEKR…VEAHNIAVNK (172 aa)) the chain is Cytoplasmic. A compositionally biased stretch (polar residues) spans 34–57 (TGQTENSFLSTESPLDSRESTYPA). A compositionally biased stretch (basic and acidic residues) spans 68 to 77 (DSTKQMDELL). Residues 78–90 (AKATSKTTSKASS) are compositionally biased toward low complexity. The segment covering 91–100 (PPGSAEQQNG) has biased composition (polar residues). A helical transmembrane segment spans residues 173-193 (LKSYTILVKWLFFLLPYLYYI). Residues 194–214 (THSARDPFQHNAVNYVLDRSN) lie on the Lumenal side of the membrane. A helical membrane pass occupies residues 215 to 234 (FFTVFTTFEIVALSVYYQLL). Residues 235-281 (MSAEKSHNVNTLDNNSKILKLVSMVPPGLVPIPNLRGKVAQALQYWD) lie on the Cytoplasmic side of the membrane. Residues 282 to 302 (VVSMYLTDLCFAIVLAGLFQY) traverse the membrane as a helical segment. The Lumenal portion of the chain corresponds to 303 to 306 (YHSM).

It belongs to the GET2 family. In terms of assembly, component of the Golgi to ER traffic (GET) complex, which is composed of GET1, GET2 and GET3. Within the complex, GET1 and GET2 form a heterotetramer which is stabilized by phosphatidylinositol binding and which binds to the GET3 homodimer.

It is found in the endoplasmic reticulum membrane. It localises to the golgi apparatus membrane. Required for the post-translational delivery of tail-anchored (TA) proteins to the endoplasmic reticulum. Together with GET1, acts as a membrane receptor for soluble GET3, which recognizes and selectively binds the transmembrane domain of TA proteins in the cytosol. The GET complex cooperates with the HDEL receptor ERD2 to mediate the ATP-dependent retrieval of resident ER proteins that contain a C-terminal H-D-E-L retention signal from the Golgi to the ER. This is Golgi to ER traffic protein 2 from Lachancea thermotolerans (strain ATCC 56472 / CBS 6340 / NRRL Y-8284) (Yeast).